Here is a 430-residue protein sequence, read N- to C-terminus: F-box/kelch-repeat protein At4g33290 (430 aa).

One can recognise an F-box domain in the interval 1–44 (MITDLPKDLIEEILSRVSMTSMRVVRLTCKSWNTLSNSESFKKM). 3 Kelch repeats span residues 161 to 207 (LLRF…CVQG), 312 to 363 (VPFI…IIEE), and 383 to 430 (LVRI…RPTR).

The sequence is that of F-box/kelch-repeat protein At4g33290 from Arabidopsis thaliana (Mouse-ear cress).